Consider the following 591-residue polypeptide: V-type ATP synthase alpha chain (591 aa).

233-240 (GPFGAGKT) contributes to the ATP binding site.

The protein belongs to the ATPase alpha/beta chains family.

It carries out the reaction ATP + H2O + 4 H(+)(in) = ADP + phosphate + 5 H(+)(out). Its function is as follows. Produces ATP from ADP in the presence of a proton gradient across the membrane. The V-type alpha chain is a catalytic subunit. This chain is V-type ATP synthase alpha chain, found in Streptococcus pyogenes serotype M2 (strain MGAS10270).